A 227-amino-acid chain; its full sequence is Cytochrome c oxidase subunit 2 (227 aa).

Topologically, residues 1–14 (MAYPFQLGLQDATS) are mitochondrial intermembrane. Residues 15 to 45 (PIMEELLHFHDHTLMIVFLISSLVLYIITLM) form a helical membrane-spanning segment. The Mitochondrial matrix segment spans residues 46–59 (LTTKLTHTSTMDAQ). A helical membrane pass occupies residues 60–87 (EVETVWTILPAIILVLIALPSLRILYMM). The Mitochondrial intermembrane segment spans residues 88-227 (DEINNPSLTV…YFETWSALMV (140 aa)). His-161, Cys-196, Glu-198, Cys-200, His-204, and Met-207 together coordinate Cu cation. Position 198 (Glu-198) interacts with Mg(2+). Tyr-218 is modified (phosphotyrosine).

This sequence belongs to the cytochrome c oxidase subunit 2 family. Component of the cytochrome c oxidase (complex IV, CIV), a multisubunit enzyme composed of 14 subunits. The complex is composed of a catalytic core of 3 subunits MT-CO1, MT-CO2 and MT-CO3, encoded in the mitochondrial DNA, and 11 supernumerary subunits COX4I, COX5A, COX5B, COX6A, COX6B, COX6C, COX7A, COX7B, COX7C, COX8 and NDUFA4, which are encoded in the nuclear genome. The complex exists as a monomer or a dimer and forms supercomplexes (SCs) in the inner mitochondrial membrane with NADH-ubiquinone oxidoreductase (complex I, CI) and ubiquinol-cytochrome c oxidoreductase (cytochrome b-c1 complex, complex III, CIII), resulting in different assemblies (supercomplex SCI(1)III(2)IV(1) and megacomplex MCI(2)III(2)IV(2)). Found in a complex with TMEM177, COA6, COX18, COX20, SCO1 and SCO2. Interacts with TMEM177 in a COX20-dependent manner. Interacts with COX20. Interacts with COX16. Cu cation is required as a cofactor.

It is found in the mitochondrion inner membrane. The catalysed reaction is 4 Fe(II)-[cytochrome c] + O2 + 8 H(+)(in) = 4 Fe(III)-[cytochrome c] + 2 H2O + 4 H(+)(out). Component of the cytochrome c oxidase, the last enzyme in the mitochondrial electron transport chain which drives oxidative phosphorylation. The respiratory chain contains 3 multisubunit complexes succinate dehydrogenase (complex II, CII), ubiquinol-cytochrome c oxidoreductase (cytochrome b-c1 complex, complex III, CIII) and cytochrome c oxidase (complex IV, CIV), that cooperate to transfer electrons derived from NADH and succinate to molecular oxygen, creating an electrochemical gradient over the inner membrane that drives transmembrane transport and the ATP synthase. Cytochrome c oxidase is the component of the respiratory chain that catalyzes the reduction of oxygen to water. Electrons originating from reduced cytochrome c in the intermembrane space (IMS) are transferred via the dinuclear copper A center (CU(A)) of subunit 2 and heme A of subunit 1 to the active site in subunit 1, a binuclear center (BNC) formed by heme A3 and copper B (CU(B)). The BNC reduces molecular oxygen to 2 water molecules using 4 electrons from cytochrome c in the IMS and 4 protons from the mitochondrial matrix. This chain is Cytochrome c oxidase subunit 2 (MT-CO2), found in Vulpes zerda (Fennec fox).